A 37-amino-acid polypeptide reads, in one-letter code: Large ribosomal subunit protein bL36 (37 aa).

This sequence belongs to the bacterial ribosomal protein bL36 family.

The chain is Large ribosomal subunit protein bL36 from Cutibacterium acnes (strain DSM 16379 / KPA171202) (Propionibacterium acnes).